Reading from the N-terminus, the 254-residue chain is ADP-ribose 1''-phosphate phosphatase (254 aa).

Residues 1-254 (MSIITEIQGD…IVQPPGSGYE (254 aa)) form the Macro domain. Substrate contacts are provided by residues 9 to 11 (GDL), 23 to 25 (ACN), and 30 to 35 (WGKGIA). Residues 86–125 (IPPQPADYQPQPQPQSQTAPLSNCGRGRGRGRGRAGGGAL) form a disordered region. The segment covering 91 to 102 (ADYQPQPQPQSQ) has biased composition (low complexity). Residue 220–226 (LNAGLFE) participates in substrate binding.

It belongs to the POA1 family.

The catalysed reaction is ADP-alpha-D-ribose 1''-phosphate + H2O = ADP-D-ribose + phosphate. Highly specific phosphatase involved in the metabolism of ADP-ribose 1''-phosphate (Appr1p) which is produced as a consequence of tRNA splicing. In Ajellomyces capsulatus (strain NAm1 / WU24) (Darling's disease fungus), this protein is ADP-ribose 1''-phosphate phosphatase (POA1).